The chain runs to 269 residues: Proline-rich protein 7 (269 aa).

Residues 1 to 9 (MVMSQGTYT) are Extracellular-facing. The segment at 1 to 44 (MVMSQGTYTFLTCFAGFWLIWGLIVLLCCFCSFLRRRLKRRQEE) is required for interaction with NMDA receptors. Residues 2 to 39 (VMSQGTYTFLTCFAGFWLIWGLIVLLCCFCSFLRRRLK) form a required for membrane localization region. The chain crosses the membrane as a helical; Signal-anchor for type III membrane protein span at residues 10–30 (FLTCFAGFWLIWGLIVLLCCF). Topologically, residues 31 to 269 (CSFLRRRLKR…IPLFGRTTAV (239 aa)) are cytoplasmic. 2 disordered regions span residues 63–83 (GSLA…RSRL) and 97–121 (PLLH…PHPP). At Ser-64 the chain carries Phosphoserine. Over residues 108-117 (AHPHPHHHAL) the composition is skewed to basic residues. Residues 146–166 (PCYEEAVLMAEPPPPYSEVLT) are required for internalization. Positions 146–269 (PCYEEAVLMA…IPLFGRTTAV (124 aa)) are required for apoptosis induction. A PDZ-binding motif is present at residues 267-269 (TAV).

In terms of assembly, forms a complex with NMDA receptor zeta subunit GRIN1 and epsilon subunit GRIN2B. Interacts with GRIN2B. Interacts with GRIN1; the interaction is reduced upon NMDA receptor activity. Found in a postsynaptic membrane complex with DLG4 and GRIN1. Interacts with DLG4 (via PDZ3 domain and to lesser degree via PDZ2 domain). Interacts with JUN. Found in a complex with JUN and FBXW7. Interacts with JUN and FBXW7; the interaction inhibits ubiquitination-mediated JUN degradation promoting its phosphorylation and transcriptional activity. Interacts with SRC. In terms of processing, palmitoylated. Tyrosine phosphorylated, possibly by SRC. Highly expressed in brain, moderately expressed in lymph nodes and T cells and low expression in thymus and spleen. Expressed in single positive progenitor thymocytes, particularly in CD8 single positive thymocytes.

Its subcellular location is the cell membrane. It is found in the postsynaptic cell membrane. The protein resides in the postsynaptic density membrane. The protein localises to the cytoplasm. It localises to the perinuclear region. Its subcellular location is the synapse. It is found in the cell projection. The protein resides in the dendrite. The protein localises to the nucleus. Functionally, acts as a synapse-to-nucleus messenger to promote NMDA receptor-mediated excitotoxicity in neurons in a JUN-dependent manner. Inhibits ubiquitination-mediated degradation and promotes phosphorylation and transcriptional activity of transcription factor JUN. Might play a redundant role in the regulation of T cell receptor signaling. Might promote apoptosis in T cells. This chain is Proline-rich protein 7 (Prr7), found in Mus musculus (Mouse).